A 243-amino-acid chain; its full sequence is R-spondin-2 (243 aa).

The signal sequence occupies residues 1–23 (MRFCLFSFALIILNCMDYSQCQG). Intrachain disulfides connect C40/C46, C43/C52, C55/C74, C78/C93, C96/C104, C101/C110, C113/C124, C128/C141, C145/C187, C156/C163, and C196/C203. The FU repeat unit spans residues 90 to 134 (MNRCARCRIENCDSCFSKDFCTKCKVGFYLHRGRCFDECPDGFAP). A TSP type-1 domain is found at 144–204 (GCEVGHWSEW…RCKMAMRHCP (61 aa)). N160 is a glycosylation site (N-linked (GlcNAc...) asparagine). The segment covering 204 to 224 (PGGKRTPKAKEKRNKKKRRKL) has biased composition (basic residues). The disordered stretch occupies residues 204 to 243 (PGGKRTPKAKEKRNKKKRRKLIERAQEQHSVFLATDRVNQ).

It belongs to the R-spondin family. As to quaternary structure, interacts with WNT1. Binds heparin. Interacts with LGR4, LGR5 and LGR6.

It localises to the secreted. In terms of biological role, activator of the canonical Wnt signaling pathway by acting as a ligand for LGR4-6 receptors. Upon binding to LGR4-6 (LGR4, LGR5 or LGR6), LGR4-6 associate with phosphorylated LRP6 and frizzled receptors that are activated by extracellular Wnt receptors, triggering the canonical Wnt signaling pathway to increase expression of target genes. Also regulates the canonical Wnt/beta-catenin-dependent pathway and non-canonical Wnt signaling by acting as an inhibitor of ZNRF3, an important regulator of the Wnt signaling pathway. Probably also acts as a ligand for frizzled and LRP receptors. During embryonic development, plays a crucial role in limb specification, amplifying the Wnt signaling pathway independently of LGR4-6 receptors, possibly by acting as a direct antagonistic ligand to RNF43 and ZNRF3, hence governing the number of limbs an embryo should form. The sequence is that of R-spondin-2 (Rspo2) from Mus musculus (Mouse).